The chain runs to 1194 residues: MKCFFPVLSCLAVLGVVSAQRQVTVQEGPLYRTEGSHITIWCNVSGYQGPSEQNFQWSIYLPSSPEREVQIVSTMDSSFPYAIYTQRVRGGKIFIERVQGNSTLLHITDLQARDAGEYECHTPSTDKQYFGSYSAKMNLVVIPDSLQTTAMPQTLHRVEQDPLELTCEVASETIQHSHLSVAWLRQKVGEKPVEVISLSRDFMLHSSSEYAQRQSLGEVRLDKLGRTTFRLTIFHLQPSDQGEFYCEAAEWIQDPDGSWYAMTRKRSEGAVVNVQPTDKEFTVRLETEKRLHTVGEPVEFRCILEAQNVPDRYFAVSWAFNSSLIATMGPNAVPVLNSEFAHREARGQLKVAKESDSVFVLKIYHLRQEDSGKYNCRVTEREKTVTGEFIDKESKRPKNIPIIVLPLKSSISVEVASNASVILEGEDLRFSCSVRTAGRPQGRFSVIWQLVDRQNRRSNIMWLDRDGTVQPGSSYWERSSFGGVQMEQVQPNSFSLGIFNSRKEDEGQYECHVTEWVRAVDGEWQIVGERRASTPISITALEMGFAVTAISRTPGVTYSDSFDLQCIIKPHYPAWVPVSVTWRFQPVGTVEFHDLVTFTRDGGVQWGDRSSSFRTRTAIEKAESSNNVRLSISRASDTEAGKYQCVAELWRKNYNNTWTRLAERTSNLLEIRVLQPVTKLQVSKSKRTLTLVENKPIQLNCSVKSQTSQNSHFAVLWYVHKPSDADGKLILKTTHNSAFEYGTYAEEEGLRARLQFERHVSGGLFSLTVQRAEVSDSGSYYCHVEEWLLSPNYAWYKLAEEVSGRTEVTVKQPDSRLRLSQAQGNLSVLETRQVQLECVVLNRTSITSQLMVEWFVWKPNHPERETVARLSRDATFHYGEQAAKNNLKGRLHLESPSPGVYRLFIQNVAVQDSGTYSCHVEEWLPSPSGMWYKRAEDTAGQTALTVMRPDASLQVDTVVPNATVSEKAAFQLDCSIVSRSSQDSRFAVAWYSLRTKAGGKRSSPGLEEQEEEREEEEEEDDDDDDDPTERTALLSVGPDAVFGPEGSPWEGRLRFQRLSPVLYRLTVLQASPQDTGNYSCHVEEWLPSPQKEWYRLTEEESAPIGIRVLDTSPTLQSIICSNDALFYFVFFYPFPIFGILIITILLVRFKSRNSSKNSDGKNGVPLLWIKEPHLNYSPTCLEPPVLSIHPGAID.

Positions 1–19 are cleaved as a signal peptide; that stretch reads MKCFFPVLSCLAVLGVVSA. Ig-like C2-type domains are found at residues 20 to 138, 143 to 262, 276 to 386, 401 to 539, 545 to 661, 676 to 803, 813 to 945, and 949 to 1097; these read QRQV…AKMN, PDSL…WYAM, PTDK…KTVT, PIIV…ISIT, FAVT…WTRL, PVTK…EEVS, PDSR…TALT, and PDAS…YRLT. The Extracellular segment spans residues 20 to 1124; the sequence is QRQVTVQEGP…LQSIICSNDA (1105 aa). 2 cysteine pairs are disulfide-bonded: Cys-42/Cys-120 and Cys-167/Cys-246. Asn-43 carries an N-linked (GlcNAc...) asparagine glycan. The EWI motif motif lies at 250–252; it reads EWI. Cys-302 and Cys-376 are joined by a disulfide. An N-linked (GlcNAc...) asparagine glycan is attached at Asn-418. 2 cysteine pairs are disulfide-bonded: Cys-432–Cys-511 and Cys-566–Cys-645. Asn-655 carries N-linked (GlcNAc...) asparagine glycosylation. 3 cysteine pairs are disulfide-bonded: Cys-701-Cys-782, Cys-838-Cys-918, and Cys-974-Cys-1080. N-linked (GlcNAc...) asparagine glycosylation is present at Asn-842. A disordered region spans residues 997-1033; the sequence is AGGKRSSPGLEEQEEEREEEEEEDDDDDDDPTERTAL. Residues 1007–1027 show a composition bias toward acidic residues; that stretch reads EEQEEEREEEEEEDDDDDDDP. Asn-1077 carries N-linked (GlcNAc...) asparagine glycosylation. The helical transmembrane segment at 1125-1145 threads the bilayer; it reads LFYFVFFYPFPIFGILIITIL. Residues 1146–1194 are Cytoplasmic-facing; it reads LVRFKSRNSSKNSDGKNGVPLLWIKEPHLNYSPTCLEPPVLSIHPGAID.

Expressed in a wide range of tissues with High expression in Placenta, kidney and lung.

Its subcellular location is the membrane. The sequence is that of Immunoglobulin superfamily member 3 (IGSF3) from Homo sapiens (Human).